We begin with the raw amino-acid sequence, 100 residues long: MLHISQEFLLPISMEHWRLLITSQVIKKIGIPWKVIFHAFQNHNRGILFLQIFEHIIDFLFGEAIIYRYVLLDPKSRQVIRDSILNSFLVLYNQIKLLEK.

It localises to the mitochondrion. This is an uncharacterized protein from Arabidopsis thaliana (Mouse-ear cress).